Reading from the N-terminus, the 504-residue chain is 2-isopropylmalate synthase (504 aa).

A Pyruvate carboxyltransferase domain is found at 6-267 (IIVFDTTLRD…YTDINFKEIY (262 aa)). Mn(2+) is bound by residues Asp-15, His-201, His-203, and Asn-237. Residues 391-504 (EIIALSSSEC…ALNSYISMKQ (114 aa)) are regulatory domain.

The protein belongs to the alpha-IPM synthase/homocitrate synthase family. LeuA type 1 subfamily. In terms of assembly, homodimer. Mn(2+) serves as cofactor.

It localises to the cytoplasm. It carries out the reaction 3-methyl-2-oxobutanoate + acetyl-CoA + H2O = (2S)-2-isopropylmalate + CoA + H(+). It functions in the pathway amino-acid biosynthesis; L-leucine biosynthesis; L-leucine from 3-methyl-2-oxobutanoate: step 1/4. In terms of biological role, catalyzes the condensation of the acetyl group of acetyl-CoA with 3-methyl-2-oxobutanoate (2-ketoisovalerate) to form 3-carboxy-3-hydroxy-4-methylpentanoate (2-isopropylmalate). The sequence is that of 2-isopropylmalate synthase from Campylobacter hominis (strain ATCC BAA-381 / DSM 21671 / CCUG 45161 / LMG 19568 / NCTC 13146 / CH001A).